A 71-amino-acid chain; its full sequence is MLLYPSVDDLLAQVDSRYSLIMLASKRAHELDAGSKPLLTDYKSPKTIGRALEEIAAGALMIDPDEKDLDA.

Belongs to the RNA polymerase subunit omega family. As to quaternary structure, the RNAP catalytic core consists of 2 alpha, 1 beta, 1 beta' and 1 omega subunit. When a sigma factor is associated with the core the holoenzyme is formed, which can initiate transcription.

The catalysed reaction is RNA(n) + a ribonucleoside 5'-triphosphate = RNA(n+1) + diphosphate. Its function is as follows. Promotes RNA polymerase assembly. Latches the N- and C-terminal regions of the beta' subunit thereby facilitating its interaction with the beta and alpha subunits. This chain is DNA-directed RNA polymerase subunit omega, found in Levilactobacillus brevis (strain ATCC 367 / BCRC 12310 / CIP 105137 / JCM 1170 / LMG 11437 / NCIMB 947 / NCTC 947) (Lactobacillus brevis).